A 598-amino-acid chain; its full sequence is Probable transporter mch1 (598 aa).

Residues 1–49 (MASPTPAPRPDQISASTPLLQSDSTSSCASSIRSLSPSRRRHRNGRTSP) form a disordered region. Residues 22–37 (SDSTSSCASSIRSLSP) show a composition bias toward low complexity. Asn-57 carries an N-linked (GlcNAc...) asparagine glycan. 6 helical membrane-spanning segments follow: residues 63-83 (ALLS…GHIF), 96-116 (GLSS…GYMC), 122-142 (GPLS…AAGV), 164-184 (LAYA…CSMY), 202-222 (GLAL…QSQL), and 241-261 (VFHF…LGTF). A disordered region spans residues 315 to 334 (AGILDPSKPDNDSDSEEEDD). A glycan (N-linked (GlcNAc...) asparagine) is linked at Asn-325. The next 6 helical transmembrane spans lie at 355–375 (HTMW…EAFI), 405–425 (IVGI…DLLA), 453–473 (FLLF…SGWI), 486–506 (LVGA…TVIW), 516–536 (GIVA…YSAV), and 565–585 (SAFW…LWAW).

This sequence belongs to the major facilitator superfamily.

It is found in the vacuole membrane. Its function is as follows. Probable transporter. The chain is Probable transporter mch1 (mch1) from Neurospora crassa (strain ATCC 24698 / 74-OR23-1A / CBS 708.71 / DSM 1257 / FGSC 987).